Reading from the N-terminus, the 441-residue chain is Phenylalanine-4-hydroxylase (441 aa).

An ACT domain is found at 23–102 (FSISKGSDKI…KATTLQESSN (80 aa)). Fe cation contacts are provided by H273, H278, and E318.

This sequence belongs to the biopterin-dependent aromatic amino acid hydroxylase family. Homotetramer. It depends on Fe(2+) as a cofactor.

The enzyme catalyses (6R)-L-erythro-5,6,7,8-tetrahydrobiopterin + L-phenylalanine + O2 = (4aS,6R)-4a-hydroxy-L-erythro-5,6,7,8-tetrahydrobiopterin + L-tyrosine. It carries out the reaction (6R)-L-erythro-5,6,7,8-tetrahydrobiopterin + L-tryptophan + O2 = 5-hydroxy-L-tryptophan + (4aS,6R)-4a-hydroxy-L-erythro-5,6,7,8-tetrahydrobiopterin. It functions in the pathway amino-acid degradation; L-phenylalanine degradation; acetoacetate and fumarate from L-phenylalanine: step 1/6. In terms of biological role, catalyzes the hydroxylation of L-phenylalanine. Hydroxylates L-tryptophan to 5-hydroxy-L-tryptophan but does not hydroxylate L-tyrosine to L-DOPA. It uses D-threo-tetrahydrodictyopterin (DH4), also known as dictyoperin, as a cofactor. This Dictyostelium discoideum (Social amoeba) protein is Phenylalanine-4-hydroxylase (pah).